We begin with the raw amino-acid sequence, 372 residues long: N-methyl-L-tryptophan oxidase (372 aa).

4 to 34 provides a ligand contact to FAD; sequence DLIIIGSGSVGAAAGYYATRAGLNVLMTDAH. Cys308 carries the S-8alpha-FAD cysteine modification.

It belongs to the MSOX/MTOX family. MTOX subfamily. Monomer. FAD is required as a cofactor.

It carries out the reaction N(alpha)-methyl-L-tryptophan + O2 + H2O = L-tryptophan + formaldehyde + H2O2. Functionally, catalyzes the oxidative demethylation of N-methyl-L-tryptophan. The protein is N-methyl-L-tryptophan oxidase of Escherichia coli O17:K52:H18 (strain UMN026 / ExPEC).